Reading from the N-terminus, the 162-residue chain is MTRKQRRLTMIGGALVVLGIAAALVLNALRDSIVFFSTPMMVSEKHIQPGQRFRLGGLVQTGSLVRGDNLAVSFRVSDGSATLPVSYKGILPDLFREGQGVVAEGALDNSGVFQADTVLAKHDETYMPKEVADALKKQGHWKDDYGAQPGAAEASSKQEVSQ.

At 1–7 (MTRKQRR) the chain is on the cytoplasmic side. The helical; Signal-anchor for type II membrane protein transmembrane segment at 8–28 (LTMIGGALVVLGIAAALVLNA) threads the bilayer. The Periplasmic segment spans residues 29 to 162 (LRDSIVFFST…EASSKQEVSQ (134 aa)). Heme contacts are provided by His122 and Tyr126. A disordered region spans residues 140–162 (HWKDDYGAQPGAAEASSKQEVSQ).

Belongs to the CcmE/CycJ family.

The protein localises to the cell inner membrane. Its function is as follows. Heme chaperone required for the biogenesis of c-type cytochromes. Transiently binds heme delivered by CcmC and transfers the heme to apo-cytochromes in a process facilitated by CcmF and CcmH. This chain is Cytochrome c-type biogenesis protein CcmE, found in Nitrobacter winogradskyi (strain ATCC 25391 / DSM 10237 / CIP 104748 / NCIMB 11846 / Nb-255).